The following is a 152-amino-acid chain: UPF0178 protein Plav_1521 (152 aa).

A disordered region spans residues 114–152; the sequence is LRETGQSKGGGPAFSKEDRSRFLRSLEDTVQAIRRRPPP. The span at 128-140 shows a compositional bias: basic and acidic residues; sequence SKEDRSRFLRSLE.

This sequence belongs to the UPF0178 family.

In Parvibaculum lavamentivorans (strain DS-1 / DSM 13023 / NCIMB 13966), this protein is UPF0178 protein Plav_1521.